The following is an 81-amino-acid chain: RNA-binding protein Hfq (81 aa).

In terms of domain architecture, Sm spans 9 to 68; the sequence is DPYLNILRKERVPVSIFLVNGIKLQGQIESFDQFVILLKNTVSQMVYKHAISTVVPSRTI.

The protein belongs to the Hfq family. Homohexamer.

In terms of biological role, RNA chaperone that binds small regulatory RNA (sRNAs) and mRNAs to facilitate mRNA translational regulation in response to envelope stress, environmental stress and changes in metabolite concentrations. Also binds with high specificity to tRNAs. This is RNA-binding protein Hfq from Marinomonas sp. (strain MWYL1).